Reading from the N-terminus, the 587-residue chain is Putative adhesin (587 aa).

Residues 1-19 (MKFAISTLLIILQAAAVFA) form the signal peptide. C211 and C261 are disulfide-bonded. N239 carries an N-linked (GlcNAc...) asparagine glycan. A run of 4 repeats spans residues 432–455 (IVTVITKEGGDKYTKTYEEVTYTK), 466–489 (IVTVKTKEGGEKVTKTYEEVTYTK), 491–512 (PEIVTVVTKEGGEKVTTTYHDV), and 513–531 (PEVVTVITKEGGEKVTTTY). The 4 X 24 AA approximate tandem repeats, Thr-rich stretch occupies residues 432–531 (IVTVITKEGG…EGGEKVTTTY (100 aa)). A lipid anchor (GPI-anchor amidated serine) is attached at S562. The propeptide at 563-587 (EAQVNLGSKSAVGLLAIVPMLFLAI) is removed in mature form.

The GPI-anchor is attached to the protein in the endoplasmic reticulum and serves to target the protein to the cell surface. There, the glucosamine-inositol phospholipid moiety is cleaved off and the GPI-modified mannoprotein is covalently attached via its lipidless GPI glycan remnant to the 1,6-beta-glucan of the outer cell wall layer.

It localises to the cell membrane. The protein localises to the secreted. Its subcellular location is the cell wall. Putative adhesion protein. May be involved in cell-cell interaction, interacting with other proteins by salt bridges and hydrogen bonds. This is Putative adhesin from Komagataella phaffii (strain ATCC 76273 / CBS 7435 / CECT 11047 / NRRL Y-11430 / Wegner 21-1) (Yeast).